We begin with the raw amino-acid sequence, 346 residues long: MAEITAKLVKELREKSGAGVMDAKKALVETDGDLDKAIELLREKGMAKAAKKADRVAAEGLTGVYVDGNVAAVIEVNAETDFVAKNDQFVTLVNETAKVIAEGRPSNNEEALALTMPSGETLEQAFVTATATIGEKISFRRFALVEKTDEQHFGAYQHNGGRIGVITVVEGGDDALAKQVSMHVAAMKPTVLSYTELDAQFVHDELAQLNHKIEQDNESRAMVNKPALPFLKYGSKAQLTDEVIAQAEEDIKAELAAEGKPEKIWDKIVPGKMDRFMLDNTKVDQEYTLLAQVYIMDDSKTVEAYLESVNAKAVAFVRFEVGEGIEKASNDFEAEVAATMAAALEK.

Residues 80-83 (TDFV) are involved in Mg(2+) ion dislocation from EF-Tu.

Belongs to the EF-Ts family.

The protein resides in the cytoplasm. In terms of biological role, associates with the EF-Tu.GDP complex and induces the exchange of GDP to GTP. It remains bound to the aminoacyl-tRNA.EF-Tu.GTP complex up to the GTP hydrolysis stage on the ribosome. The chain is Elongation factor Ts from Streptococcus agalactiae serotype Ia (strain ATCC 27591 / A909 / CDC SS700).